The primary structure comprises 135 residues: Galectin-1 (135 aa).

The residue at position 2 (A2) is an N-acetylalanine. The 132-residue stretch at 4 to 135 (GLVASNLNLK…DFKIKCVAFE (132 aa)) folds into the Galectin domain. An N6-acetyllysine mark is found at K13 and K29. A Phosphoserine modification is found at S30. A beta-D-galactoside contacts are provided by residues 45 to 49 (HFNPR), H53, N62, and 69 to 72 (WGAE). Position 108 is an N6-acetyllysine; alternate (K108). At K108 the chain carries N6-succinyllysine; alternate. K128 carries the post-translational modification N6-acetyllysine.

As to quaternary structure, homodimer. Binds LGALS3BP. Interacts with CD2, CD3, CD4, CD6, CD7, CD43, ALCAM and CD45. Interacts with laminin (via poly-N-acetyllactosamine). Interacts with SUSD2. Interacts with cargo receptor TMED10; the interaction mediates the translocation from the cytoplasm into the ERGIC (endoplasmic reticulum-Golgi intermediate compartment) and thereby secretion.

The protein resides in the secreted. Its subcellular location is the extracellular space. It localises to the extracellular matrix. It is found in the cytoplasm. Its function is as follows. Lectin that binds beta-galactoside and a wide array of complex carbohydrates. Plays a role in regulating apoptosis, cell proliferation and cell differentiation. Inhibits CD45 protein phosphatase activity and therefore the dephosphorylation of Lyn kinase. Strong inducer of T-cell apoptosis. Has hemagglutinating activity towards human erythrocytes. In Capra hircus (Goat), this protein is Galectin-1.